The primary structure comprises 233 residues: Protein lin-7 homolog A (233 aa).

The 56-residue stretch at 25 to 80 folds into the L27 domain; that stretch reads LDRDVARAIELLEKLQESGEVPVHKLQSLKKVLQSEFCTAIREVYQYMHETITVNG. The region spanning 108–190 is the PDZ domain; that stretch reads VVELPKTDEG…SVKLVVRYTP (83 aa).

This sequence belongs to the lin-7 family. In terms of assembly, forms a complex with CASK and CASKIN1. Component of the brain-specific heterotrimeric complex (LIN-10-LIN-2-LIN-7 complex) composed of at least APBA1, CASK, and LIN7, which associates with the motor protein KIF17 to transport vesicles along microtubules. Can also interact with other modular proteins containing protein-protein interaction domains like PALS1, PALS2, MPP7, DLG1, DLG2 and DLG3 through its L27 domain. Interacts with DLG4, GRIN2B and MARCHF11 as well as CDH1 and CTNNB1, the channels KCNJ12/Kir2.2, KCNJ4/Kir2.3 and probably KCNJ2/Kir2.1 and SLC6A12/BGT-1 via its PDZ domain. The association of LIN7A with cadherin and beta-catenin is calcium-dependent, occurs at synaptic junctions and requires the actin cytoskeleton. Interacts with EGFR, ERBB2, ERBB3 and ERBB4 with both PDZ and KID domains. Associates with KIF17 via APBA1. Interacts with HTR4. Forms a tripartite complex composed of DLG1, MPP7 and LIN7 (LIN7A or LIN7C).

Its subcellular location is the cell membrane. The protein localises to the basolateral cell membrane. The protein resides in the cell junction. It is found in the postsynaptic density membrane. It localises to the tight junction. Its function is as follows. Plays a role in establishing and maintaining the asymmetric distribution of channels and receptors at the plasma membrane of polarized cells. Forms membrane-associated multiprotein complexes that may regulate delivery and recycling of proteins to the correct membrane domains. The tripartite complex composed of LIN7 (LIN7A, LIN7B or LIN7C), CASK and APBA1 associates with the motor protein KIF17 to transport vesicles containing N-methyl-D-aspartate (NMDA) receptor subunit NR2B along microtubules. This complex may have the potential to couple synaptic vesicle exocytosis to cell adhesion in brain. Ensures the proper localization of GRIN2B (subunit 2B of the NMDA receptor) to neuronal postsynaptic density and may function in localizing synaptic vesicles at synapses where it is recruited by beta-catenin and cadherin. Required to localize Kir2 channels, GABA transporter (SLC6A12) and EGFR/ERBB1, ERBB2, ERBB3 and ERBB4 to the basolateral membrane of epithelial cells. This is Protein lin-7 homolog A (LIN7A) from Bos taurus (Bovine).